A 658-amino-acid polypeptide reads, in one-letter code: A-type ATP synthase subunit I (658 aa).

The next 7 helical transmembrane spans lie at 383-403, 427-447, 475-495, 507-526, 530-552, 568-588, and 591-611; these read MAFV…YGII, IIMM…NGFI, ILIM…ILGA, ALGS…LYLV, IFGA…LFGL, LLAL…LTGL, and EMIP…GHIA.

Belongs to the V-ATPase 116 kDa subunit family. In terms of assembly, has multiple subunits with at least A(3), B(3), C, D, E, F, H, I and proteolipid K(x).

It is found in the cell membrane. In terms of biological role, component of the A-type ATP synthase that produces ATP from ADP in the presence of a proton gradient across the membrane. The polypeptide is A-type ATP synthase subunit I (Methanothermobacter thermautotrophicus (strain ATCC 29096 / DSM 1053 / JCM 10044 / NBRC 100330 / Delta H) (Methanobacterium thermoautotrophicum)).